The primary structure comprises 307 residues: Small ribosomal subunit biogenesis GTPase RsgA (307 aa).

The tract at residues 1–20 is disordered; sequence MPSEHPFSDGISTPNPKETM. A compositionally biased stretch (polar residues) spans 10–20; it reads GISTPNPKETM. The CP-type G domain maps to 85-242; sequence RQDAWKTKLI…LIDSPGLQEF (158 aa). Residues 135-138 and 184-192 each bind GTP; these read NKAD and GQSGMGKST. Residues Cys266, Cys271, His273, and Cys279 each contribute to the Zn(2+) site.

It belongs to the TRAFAC class YlqF/YawG GTPase family. RsgA subfamily. As to quaternary structure, monomer. Associates with 30S ribosomal subunit, binds 16S rRNA. It depends on Zn(2+) as a cofactor.

It is found in the cytoplasm. One of several proteins that assist in the late maturation steps of the functional core of the 30S ribosomal subunit. Helps release RbfA from mature subunits. May play a role in the assembly of ribosomal proteins into the subunit. Circularly permuted GTPase that catalyzes slow GTP hydrolysis, GTPase activity is stimulated by the 30S ribosomal subunit. The sequence is that of Small ribosomal subunit biogenesis GTPase RsgA from Neisseria meningitidis serogroup A / serotype 4A (strain DSM 15465 / Z2491).